The sequence spans 311 residues: Putative HTH-type transcriptional regulatory protein MTH_967 (311 aa).

One can recognise an HTH cro/C1-type domain in the interval 134 to 192; sequence LREVREEYNLSLKDLADLAHVSRKTIYKYENGLARASAETAMILEEILNIRITLSIDIF. A DNA-binding region (H-T-H motif) is located at residues 145-164; the sequence is LKDLADLAHVSRKTIYKYEN.

In Methanothermobacter thermautotrophicus (strain ATCC 29096 / DSM 1053 / JCM 10044 / NBRC 100330 / Delta H) (Methanobacterium thermoautotrophicum), this protein is Putative HTH-type transcriptional regulatory protein MTH_967.